We begin with the raw amino-acid sequence, 104 residues long: Large ribosomal subunit protein bL21 (104 aa).

Belongs to the bacterial ribosomal protein bL21 family. As to quaternary structure, part of the 50S ribosomal subunit. Contacts protein L20.

Functionally, this protein binds to 23S rRNA in the presence of protein L20. The chain is Large ribosomal subunit protein bL21 from Acidiphilium cryptum (strain JF-5).